Here is a 738-residue protein sequence, read N- to C-terminus: 1,4-alpha-glucan branching enzyme GlgB (738 aa).

Catalysis depends on Asp-417, which acts as the Nucleophile. Catalysis depends on Glu-472, which acts as the Proton donor.

It belongs to the glycosyl hydrolase 13 family. GlgB subfamily. Monomer.

The catalysed reaction is Transfers a segment of a (1-&gt;4)-alpha-D-glucan chain to a primary hydroxy group in a similar glucan chain.. It functions in the pathway glycan biosynthesis; glycogen biosynthesis. Functionally, catalyzes the formation of the alpha-1,6-glucosidic linkages in glycogen by scission of a 1,4-alpha-linked oligosaccharide from growing alpha-1,4-glucan chains and the subsequent attachment of the oligosaccharide to the alpha-1,6 position. The polypeptide is 1,4-alpha-glucan branching enzyme GlgB (Burkholderia pseudomallei (strain K96243)).